Reading from the N-terminus, the 660-residue chain is Leucine-rich repeat transmembrane protein FLRT2 (660 aa).

Positions 1–35 (MGLQTTKWPSHGAFFLKSWLIISLGLYSQVSKLLA) are cleaved as a signal peptide. 2 cysteine pairs are disulfide-bonded: Cys36–Cys42 and Cys40–Cys49. An LRRNT domain is found at 36–63 (CPSVCRCDRNFVYCNERSLTSVPLGIPE). The Extracellular portion of the chain corresponds to 36–541 (CPSVCRCDRN…TTSHSMGSPF (506 aa)). 10 LRR repeats span residues 64–85 (GVTVLYLHNNQINNAGFPAELH), 89–109 (SVHTVYLYGNQLDEFPMNLPK), 110–131 (NVRVLHLQENNIQTISRAALAQ), 134–155 (KLEELHLDDNSISTVGVEDGAF), 160–181 (SLKLLFLSKNHLSSVPVGLPVD), 182–202 (LQELRVDENRIAVISDMAFQN), 205–225 (SLERLIVDGNLLTNKGIAEGT), 231–252 (KLKEFSIVRNSLSHPPPDLPGT), 253–274 (HLIRLYLQDNQINHIPLTAFSN), and 277–298 (KLERLDISNNQLRMLTQGVFDN). Asn202 carries an N-linked (GlcNAc...) asparagine glycan. Asn298 carries an N-linked (GlcNAc...) asparagine glycan. An LRRCT domain is found at 310 to 362 (NPWFCDCSIKWVTEWLKYIPSSLNVRGFMCQGPEQVRGMAVRELNMNLLSCPT). 2 cysteine pairs are disulfide-bonded: Cys314–Cys339 and Cys316–Cys360. Positions 373-409 (APSTASPTTQPPTLSIPNPSRSYTPPTPTTSKLPTIP) are enriched in low complexity. A disordered region spans residues 373 to 413 (APSTASPTTQPPTLSIPNPSRSYTPPTPTTSKLPTIPDWDG). Positions 419 to 517 (PPISERIQLS…ICSEATTHAS (99 aa)) constitute a Fibronectin type-III domain. N-linked (GlcNAc...) asparagine glycosylation is found at Asn433 and Asn521. Residues 542-562 (LLAGLIGGAVIFVLVVLLSVF) form a helical membrane-spanning segment. Residues 563–660 (CWHMHKKGRY…SVPDLEHCHT (98 aa)) lie on the Cytoplasmic side of the membrane.

As to quaternary structure, self-associates (via leucine-rich repeats), giving rise to homooligomers. Interacts with FGFR1. Interacts with FGFR2. Interacts (via extracellular domain) with ADGRL1/LPHN1. Interacts (via extracellular domain) with ADGRL3 (via olfactomedin-like domain). Interacts (via extracellular domain) with UNC5D (via the first Ig-like domain). Can also interact (via extracellular domain) with UNC5B, but with much lower affinity. Interacts (via extracellular domain) with FN1. N-glycosylated. Post-translationally, proteolytic cleavage in the juxtamembrane region gives rise to a soluble ectodomain. Cleavage is probably effected by a metalloprotease. In terms of tissue distribution, expressed in pancreas, skeletal muscle, brain, and heart.

It localises to the cell membrane. The protein resides in the endoplasmic reticulum membrane. Its subcellular location is the cell junction. It is found in the focal adhesion. The protein localises to the secreted. It localises to the extracellular space. The protein resides in the extracellular matrix. Its subcellular location is the microsome membrane. It is found in the synapse. The protein localises to the synaptosome. In terms of biological role, functions in cell-cell adhesion, cell migration and axon guidance. Mediates cell-cell adhesion via its interactions with ADGRL3 and probably also other latrophilins that are expressed at the surface of adjacent cells. May play a role in the migration of cortical neurons during brain development via its interaction with UNC5D. Mediates axon growth cone collapse and plays a repulsive role in neuron guidance via its interaction with UNC5D, and possibly also other UNC-5 family members. Plays a role in fibroblast growth factor-mediated signaling cascades. Required for normal organization of the cardiac basement membrane during embryogenesis, and for normal embryonic epicardium and heart morphogenesis. The sequence is that of Leucine-rich repeat transmembrane protein FLRT2 (FLRT2) from Homo sapiens (Human).